Consider the following 293-residue polypeptide: uncharacterized protein (293 aa).

Belongs to the TolB family.

This is an uncharacterized protein from Agrobacterium fabrum (strain C58 / ATCC 33970) (Agrobacterium tumefaciens (strain C58)).